Consider the following 195-residue polypeptide: Large ribosomal subunit protein bL32m (195 aa).

Positions 95, 98, 108, and 111 each coordinate Zn(2+).

The protein belongs to the bacterial ribosomal protein bL32 family. Component of the mitochondrial large ribosomal subunit (mt-LSU).

The protein resides in the mitochondrion. In terms of biological role, component of the mitochondrial large ribosomal subunit (mt-LSU). The mitochondrial ribosome (mitoribosome) is a large ribonucleoprotein complex responsible for the synthesis of proteins inside mitochondria. The polypeptide is Large ribosomal subunit protein bL32m (mRpL32) (Drosophila melanogaster (Fruit fly)).